A 70-amino-acid chain; its full sequence is Conotoxin Cl6.13 (70 aa).

Residues 1–21 form the signal peptide; it reads MKFPLLFISLALAAFLTRVQD. A propeptide spanning residues 22 to 33 is cleaved from the precursor; the sequence is ADSSVISKEKSV. Intrachain disulfides connect Cys41/Cys58, Cys48/Cys63, and Cys57/Cys68.

Expressed by the venom duct.

Its subcellular location is the secreted. The protein is Conotoxin Cl6.13 of Californiconus californicus (California cone).